Consider the following 329-residue polypeptide: Gamma-resorcylate decarboxylase (329 aa).

Residues Glu-8, His-10, His-167, and Asp-290 each contribute to the Zn(2+) site. The active site involves Asp-290.

This sequence belongs to the metallo-dependent hydrolases superfamily. ACMSD family. Requires Zn(2+) as cofactor.

It carries out the reaction 2,6-dihydroxybenzoate + H(+) = resorcinol + CO2. Its pathway is aromatic compound metabolism. Involved in the gamma-resorcylate (2,6-dihydroxybenzoate) catabolism. Catalyzes the reversible decarboxylation of gamma-resorcylate to resorcinol. The protein is Gamma-resorcylate decarboxylase of Rhodococcus jostii (strain RHA1).